Consider the following 623-residue polypeptide: MEKREFKAESKRLLDIVINSIYTNREIFLRELISNASDAIDKVYYKTLGDSSLTFNKDDYYIKIKPNKEERTLTISDKGIGMTEKELDENLGVIAKSGSLQFKKENEIKDGFDIIGQFGVGFYSGFLVADKITVITKAFGADKAYKWESDGVDGYTISEAEKDSFGTDIILHLKANDEDENYDEFLEEYKLKSLIKKYSDFIRYPIKLDVTKSRVKEGTENEHEEYVEEETVNSMVPLWRRNKNELTDDDYNNFYVEKRFGFDKPLRHMHISVDGMISYNSILYIPENIPYDYYTKEYEKGLELYSNGVLIMEKCSELLPDYFGFVKGIVDSQDLSLNISREMLQHDRQLSRIAKNIKTKIKNELESMMKNDRESYEKFYKSFGRQLKYGVYDDFGMNKDELKDLLMFYSSKEKKMVSLAEYVERMAEDQKYIYYAVGESNERIEKMPQTEMVLDKGYEILYFTEDVDEFAIKMLMNYKEKEFKSVSSGDLGIESEEENKKENEENKGIFEAMKEALGEKISAVKASSRLKNYPVCLSSEGEVSIEMEKILSAMPNNQGVKAQKVLEVNTNHEVFNSLKDALENDKDKFNLYTKLLYNQALLVEGLSIENPVDFTNDICKLMK.

Residues 1–341 (MEKREFKAES…SQDLSLNISR (341 aa)) are a; substrate-binding. The interval 342–549 (EMLQHDRQLS…EGEVSIEMEK (208 aa)) is b. Residues 550–623 (ILSAMPNNQG…FTNDICKLMK (74 aa)) are c.

Belongs to the heat shock protein 90 family. As to quaternary structure, homodimer.

The protein resides in the cytoplasm. Molecular chaperone. Has ATPase activity. This Clostridium perfringens (strain 13 / Type A) protein is Chaperone protein HtpG.